A 438-amino-acid chain; its full sequence is Glyceraldehyde-3-phosphate dehydrogenase B, chloroplastic (438 aa).

A chloroplast-targeting transit peptide spans 1-53; it reads CLSKKFEVAEFAGLRSSGCVTFSNKESSFFDVVSAQLTPKTTRSTPVKGETVA. Residues 64–65, D88, and R133 each bind NADP(+); that span reads RI. Residues 207-209, T238, R253, 266-267, and R289 each bind D-glyceraldehyde 3-phosphate; these read SCT and TG. C208 functions as the Nucleophile in the catalytic mechanism. N372 provides a ligand contact to NADP(+).

This sequence belongs to the glyceraldehyde-3-phosphate dehydrogenase family. Tetramer of either four A chains (GAPDH 2) or two A and two B chains (GAPDH 1).

The protein resides in the plastid. Its subcellular location is the chloroplast. The catalysed reaction is D-glyceraldehyde 3-phosphate + phosphate + NADP(+) = (2R)-3-phospho-glyceroyl phosphate + NADPH + H(+). Its pathway is carbohydrate biosynthesis; Calvin cycle. The polypeptide is Glyceraldehyde-3-phosphate dehydrogenase B, chloroplastic (GAPB) (Nicotiana tabacum (Common tobacco)).